A 500-amino-acid polypeptide reads, in one-letter code: Cytochrome P450 monooxygenase hepD (500 aa).

The chain crosses the membrane as a helical span at residues 15–35; it reads WILLSLSLAFIVVYSLFYLAV. N-linked (GlcNAc...) asparagine glycans are attached at residues N99, N185, N373, and N409. Position 445 (C445) interacts with heme. N482 is a glycosylation site (N-linked (GlcNAc...) asparagine).

This sequence belongs to the cytochrome P450 family. The cofactor is heme.

It is found in the membrane. It participates in secondary metabolite biosynthesis. Functionally, cytochrome P450 monooxygenase; part of the gene cluster that mediates the biosynthesis of heptelidic acid (HA), a sesquiterpene lactone that acts as an inhibitor of glyceraldehyde-3-phosphatedehydrogenase (GAPDH) and a growth inhibitor of the salt-tolerant lactic acid bacteria in soy sauce brewing. The chain is Cytochrome P450 monooxygenase hepD from Aspergillus oryzae (strain ATCC 42149 / RIB 40) (Yellow koji mold).